A 214-amino-acid polypeptide reads, in one-letter code: Cell division protein B1 (214 aa).

Its function is as follows. Part of a cell division machinery. This Sulfolobus acidocaldarius (strain ATCC 33909 / DSM 639 / JCM 8929 / NBRC 15157 / NCIMB 11770) protein is Cell division protein B1.